The following is a 453-amino-acid chain: Plasmepsin II (453 aa).

Residues 1-37 (MDITVREHDFKHGFIKSNSTFDGLNIDNSKNKKKIQK) are Cytoplasmic-facing. A propeptide spanning residues 1-124 (MDITVREHDF…SGLTKTNYLG (124 aa)) is cleaved from the precursor. Residues 38 to 58 (GFQILYVLLFCSVMCGLFYYV) form a helical; Signal-anchor for type II membrane protein membrane-spanning segment. The Lumenal segment spans residues 59-453 (YENVWLQRDN…VGIALAKKNL (395 aa)). The 308-residue stretch at 140 to 447 (FYGDAEVGDN…DYDNQSVGIA (308 aa)) folds into the Peptidase A1 domain. The active site involves Asp-158. Cys-171 and Cys-176 are joined by a disulfide. Asp-338 is a catalytic residue. Cys-373 and Cys-409 are joined by a disulfide.

The protein belongs to the peptidase A1 family. Component of the hemozoin formation complex (HFC) composed of falcipains FP2A and/or FP2B, plasmepsins PMII, PMIII/HAP and PMIV, heme detoxifying protein HDP and falcilysin FLN. The HFC complex is involved in hemoglobin degradation and detoxification of heme in the food vacuole during the asexual blood stage. Not N-glycosylated. Post-translationally, proteolytically cleaved into the soluble active mature form in the digestive vacuole by cysteine protease falcipains; the process begins at the early ring stage. Proteolysis requires an acidic environment. In absence of falcipains, autoprocessing may serve as an alternate activation system.

It is found in the membrane. It localises to the vacuole lumen. Its subcellular location is the vacuole membrane. The catalysed reaction is Hydrolysis of the bonds linking certain hydrophobic residues in hemoglobin or globin. Also cleaves small molecules substrates such as Ala-Leu-Glu-Arg-Thr-Phe-|-Phe(NO2)-Ser-Phe-Pro-Thr.. Inhibited by pepstatin A. Inhibited by KNI derived compounds (KNI-10742, 10743, 10395, 10333, and 10343). Its function is as follows. During the asexual blood stage, participates in initial cleavage of native host hemoglobin (Hb) resulting in Hb denaturation. May cleave preferentially denatured hemoglobin that has been cleaved by PMI. Digestion of host Hb is an essential step which provides the parasite with amino acids for protein synthesis, and regulates osmolarity. The protein is Plasmepsin II of Plasmodium falciparum (isolate 3D7).